Reading from the N-terminus, the 848-residue chain is Dynein axonemal intermediate chain 4 (848 aa).

2 disordered regions span residues 345-370 (SKANVLPKDQDQRLPGSTTEKNSETS) and 431-464 (EPEPEEPEDVLESAKHEEVEEESKKEEEEEIHAE). Residues 359 to 370 (PGSTTEKNSETS) show a composition bias toward polar residues. Over residues 442 to 456 (ESAKHEEVEEESKKE) the composition is skewed to basic and acidic residues. WD repeat units follow at residues 534–574 (QSPY…NVPV), 583–631 (KHLG…DCYD), 658–698 (SRQA…QYLD), 702–742 (GHKG…PSLS), 745–784 (PATSVVYDVAWSPKSSYIFAAANENRVEIWDLHISTLDPL), and 790–829 (NPGIKFTTILFAKQTDCLLVGDSDGQVSVYELRNMPTVLE).

As to quaternary structure, part of the multisubunit axonemal dynein complex formed at least of two heavy chains and a number of intermediate and light chains. Associated with axonemal dynein subunits such as, DNAH2, DNAI3, and DYNLT1. Interacts with DYNLT1.

It is found in the cytoplasm. The protein localises to the cytoskeleton. The protein resides in the flagellum axoneme. Its subcellular location is the cilium axoneme. It localises to the dynein axonemal particle. Functionally, plays a critical role in the assembly of axonemal dynein complex, thereby playing a role in ciliary motility. The chain is Dynein axonemal intermediate chain 4 from Homo sapiens (Human).